The chain runs to 302 residues: Plant UBX domain-containing protein 3 (302 aa).

2 disordered regions span residues 1-64 (MSSK…PKHD) and 79-98 (VEGP…TGRL). One can recognise an SEP domain in the interval 113 to 177 (PVIHNIIFWS…NLMRRDEKCP (65 aa)). The UBX domain occupies 224 to 301 (ETLPSTSIQL…GLASSVVIQK (78 aa)).

In terms of assembly, interacts with CDC48A.

This Arabidopsis thaliana (Mouse-ear cress) protein is Plant UBX domain-containing protein 3.